We begin with the raw amino-acid sequence, 92 residues long: Acylphosphatase (92 aa).

In terms of domain architecture, Acylphosphatase-like spans 5-92 (RVKVKVNGRV…GVFERFEVRF (88 aa)). Residues Arg-20 and Asn-38 contribute to the active site.

It belongs to the acylphosphatase family.

The catalysed reaction is an acyl phosphate + H2O = a carboxylate + phosphate + H(+). The polypeptide is Acylphosphatase (acyP) (Syntrophotalea carbinolica (strain DSM 2380 / NBRC 103641 / GraBd1) (Pelobacter carbinolicus)).